The primary structure comprises 20 residues: 39 kDa major outer membrane protein (20 aa).

It localises to the cell outer membrane. This Aggregatibacter actinomycetemcomitans (Actinobacillus actinomycetemcomitans) protein is 39 kDa major outer membrane protein.